We begin with the raw amino-acid sequence, 503 residues long: Probable cytosol aminopeptidase (503 aa).

Mn(2+) is bound by residues K270 and D275. Residue K282 is part of the active site. Mn(2+) is bound by residues D293, D352, and E354. R356 is a catalytic residue.

Belongs to the peptidase M17 family. It depends on Mn(2+) as a cofactor.

The protein resides in the cytoplasm. The enzyme catalyses Release of an N-terminal amino acid, Xaa-|-Yaa-, in which Xaa is preferably Leu, but may be other amino acids including Pro although not Arg or Lys, and Yaa may be Pro. Amino acid amides and methyl esters are also readily hydrolyzed, but rates on arylamides are exceedingly low.. It catalyses the reaction Release of an N-terminal amino acid, preferentially leucine, but not glutamic or aspartic acids.. Its function is as follows. Presumably involved in the processing and regular turnover of intracellular proteins. Catalyzes the removal of unsubstituted N-terminal amino acids from various peptides. This Shigella dysenteriae serotype 1 (strain Sd197) protein is Probable cytosol aminopeptidase.